We begin with the raw amino-acid sequence, 333 residues long: UDP-N-acetylglucosamine--N-acetylmuramyl-(pentapeptide) pyrophosphoryl-undecaprenol N-acetylglucosamine transferase (333 aa).

Residues threonine 10–glycine 12, asparagine 124, serine 177, and glutamine 275 contribute to the UDP-N-acetyl-alpha-D-glucosamine site.

Belongs to the glycosyltransferase 28 family. MurG subfamily.

The protein localises to the cell inner membrane. It catalyses the reaction di-trans,octa-cis-undecaprenyl diphospho-N-acetyl-alpha-D-muramoyl-L-alanyl-D-glutamyl-meso-2,6-diaminopimeloyl-D-alanyl-D-alanine + UDP-N-acetyl-alpha-D-glucosamine = di-trans,octa-cis-undecaprenyl diphospho-[N-acetyl-alpha-D-glucosaminyl-(1-&gt;4)]-N-acetyl-alpha-D-muramoyl-L-alanyl-D-glutamyl-meso-2,6-diaminopimeloyl-D-alanyl-D-alanine + UDP + H(+). It participates in cell wall biogenesis; peptidoglycan biosynthesis. Cell wall formation. Catalyzes the transfer of a GlcNAc subunit on undecaprenyl-pyrophosphoryl-MurNAc-pentapeptide (lipid intermediate I) to form undecaprenyl-pyrophosphoryl-MurNAc-(pentapeptide)GlcNAc (lipid intermediate II). The sequence is that of UDP-N-acetylglucosamine--N-acetylmuramyl-(pentapeptide) pyrophosphoryl-undecaprenol N-acetylglucosamine transferase from Nitratiruptor sp. (strain SB155-2).